The sequence spans 233 residues: Histone H1-I (233 aa).

2 disordered regions span residues 1 to 55 (MSDS…HPPV) and 115 to 233 (TGAS…KKSK). Residues 17–29 (KAATPAKSPAKSP) show a composition bias toward low complexity. Residues 51–125 (THPPVSEMVV…GASGSFKMPP (75 aa)) enclose the H15 domain. 2 stretches are compositionally biased toward basic and acidic residues: residues 128–137 (KKVDKPEAAP) and 144–155 (PKREIEKKEKKV). Basic residues-rich tracts occupy residues 172–186 (AAKKAVAKPAAKKAA), 199–213 (SPKKAAAKPKAKPTP), and 223–233 (AAAKKPAKKSK).

It belongs to the histone H1/H5 family.

The protein resides in the nucleus. Its subcellular location is the chromosome. Functionally, histones H1 are necessary for the condensation of nucleosome chains into higher-order structures. In Glyptotendipes salinus (Midge), this protein is Histone H1-I.